Here is a 455-residue protein sequence, read N- to C-terminus: Retinoic acid receptor beta (455 aa).

A modulating region spans residues 1-87 (MTTSSRTCPV…PLPPPRVYKP (87 aa)). The interval 44 to 78 (LQSHPPTSGCSTPSPATVETQSTSSEELVPSPPSP) is disordered. A compositionally biased stretch (polar residues) spans 47 to 66 (HPPTSGCSTPSPATVETQST). 2 NR C4-type zinc fingers span residues 88-108 (CFVC…CEGC) and 124-148 (CHRD…LQKC). The nuclear receptor DNA-binding region spans 88 to 153 (CFVCQDKSSG…RLQKCFEVGM (66 aa)). The tract at residues 154–182 (SKESVRNDRNKKKKEPTKQESTENYEMTA) is hinge. Residues 183 to 417 (ELDDLTEKIR…PLIQEMLENS (235 aa)) enclose the NR LBD domain. Residues 416-455 (NSEGHEPLTPTSNGNTAEHSPSISPSSVDNSSVSQSPMVQ) are disordered. Residues 424 to 434 (TPTSNGNTAEH) show a composition bias toward polar residues. Over residues 435 to 455 (SPSISPSSVDNSSVSQSPMVQ) the composition is skewed to low complexity.

The protein belongs to the nuclear hormone receptor family. NR1 subfamily. Heterodimer; with a RXR molecule. Binds DNA preferentially as a RAR/RXR heterodimer.

It localises to the nucleus. Functionally, receptor for retinoic acid. Retinoic acid receptors bind as heterodimers to their target response elements in response to their ligands, all-trans or 9-cis retinoic acid, and regulate gene expression in various biological processes. The RAR/RXR heterodimers bind to the retinoic acid response elements (RARE) composed of tandem 5'-AGGTCA-3' sites known as DR1-DR5. Required for limb and craniofacial development. The protein is Retinoic acid receptor beta (RARB) of Gallus gallus (Chicken).